We begin with the raw amino-acid sequence, 771 residues long: Metal transporter CNNM4 (771 aa).

Residues 1–175 (MAPGGGGGRR…LLFMVEEHGR (175 aa)) are Extracellular-facing. The N-linked (GlcNAc...) asparagine glycan is linked to asparagine 119. A CNNM transmembrane domain is found at 175-355 (RFLPLWLHIL…EPYNDLVKEE (181 aa)). Residues 176–196 (FLPLWLHILLVMVLLVLSGIF) traverse the membrane as a helical segment. Residues 197–237 (SGLNLGLMALDPMELRIVQNCGTEKERKYARKIEPIRRKGN) lie on the Cytoplasmic side of the membrane. Residues 238–258 (YLLCSLLLGNVLVNTSLTILL) constitute an intramembrane region (helical). Topologically, residues 259–261 (DNL) are cytoplasmic. The chain crosses the membrane as a helical span at residues 262-282 (IGSGIMAVASSTIGIVIFGEI). Residues 283-290 (LPQALCSR) lie on the Extracellular side of the membrane. The chain crosses the membrane as a helical span at residues 291–313 (HGLAVGANTIVLTKVFMLLTFPL). The Cytoplasmic portion of the chain corresponds to 314-771 (SFPISKLLDF…LHRASEEETI (458 aa)). 2 consecutive CBS domains span residues 374–435 (MTQL…CTPL) and 442–508 (YNHP…ILDE). Residues serine 657, serine 661, and serine 766 each carry the phosphoserine modification.

The protein belongs to the ACDP family. As to quaternary structure, interacts with COX11. In terms of tissue distribution, cornea, retina, teeth (at protein level). In the retina it is predominantly localized to the outer plexiform layer, inner plexiform layer and ganglion cell layer. In the tooth strongest expression is observed in the cell body of the ameloblasts. Expressed at high levels in the gastrointestinal tract and testis.

It is found in the cell membrane. Functionally, probable metal transporter. The interaction with the metal ion chaperone COX11 suggests that it may play a role in sensory neuron functions. May play a role in biomineralization and retinal function. This Mus musculus (Mouse) protein is Metal transporter CNNM4 (Cnnm4).